We begin with the raw amino-acid sequence, 517 residues long: Bifunctional purine biosynthesis protein PurH (517 aa).

Positions methionine 1–cysteine 146 constitute an MGS-like domain.

This sequence belongs to the PurH family.

The enzyme catalyses (6R)-10-formyltetrahydrofolate + 5-amino-1-(5-phospho-beta-D-ribosyl)imidazole-4-carboxamide = 5-formamido-1-(5-phospho-D-ribosyl)imidazole-4-carboxamide + (6S)-5,6,7,8-tetrahydrofolate. The catalysed reaction is IMP + H2O = 5-formamido-1-(5-phospho-D-ribosyl)imidazole-4-carboxamide. Its pathway is purine metabolism; IMP biosynthesis via de novo pathway; 5-formamido-1-(5-phospho-D-ribosyl)imidazole-4-carboxamide from 5-amino-1-(5-phospho-D-ribosyl)imidazole-4-carboxamide (10-formyl THF route): step 1/1. The protein operates within purine metabolism; IMP biosynthesis via de novo pathway; IMP from 5-formamido-1-(5-phospho-D-ribosyl)imidazole-4-carboxamide: step 1/1. In Trichodesmium erythraeum (strain IMS101), this protein is Bifunctional purine biosynthesis protein PurH.